The chain runs to 266 residues: Phosphonates import ATP-binding protein PhnC (266 aa).

In terms of domain architecture, ABC transporter spans 2 to 246 (IEIKNVSKTY…KFAEIYGRPI (245 aa)). 35 to 42 (GLSGAGKS) contributes to the ATP binding site.

This sequence belongs to the ABC transporter superfamily. Phosphonates importer (TC 3.A.1.9.1) family. As to quaternary structure, the complex is composed of two ATP-binding proteins (PhnC), two transmembrane proteins (PhnE) and a solute-binding protein (PhnD).

The protein localises to the cell membrane. The catalysed reaction is phosphonate(out) + ATP + H2O = phosphonate(in) + ADP + phosphate + H(+). Its function is as follows. Part of the ABC transporter complex PhnCDE involved in phosphonates import. Responsible for energy coupling to the transport system. This is Phosphonates import ATP-binding protein PhnC from Shouchella clausii (strain KSM-K16) (Alkalihalobacillus clausii).